The sequence spans 703 residues: Capsid vertex component 1 (703 aa).

The disordered stretch occupies residues 200–246 (LGESASPRPQPLARPHAGAPADPPIVGASDPPISPEEQLTAPGGDTT).

Belongs to the herpesviridae CVC1 protein family. As to quaternary structure, interacts (via C-terminus) with capsid vertex component 2/CVC2.

The protein resides in the virion. Its subcellular location is the host nucleus. Its function is as follows. Capsid vertex-specific component that plays a role during viral DNA encapsidation, assuring correct genome cleavage and presumably stabilizing capsids that contain full-length viral genomes. The chain is Capsid vertex component 1 from Human herpesvirus 1 (strain 17) (HHV-1).